Reading from the N-terminus, the 279-residue chain is Thymidylate synthase (279 aa).

A dUMP-binding site is contributed by 133 to 134; the sequence is RR. Cys154 acts as the Nucleophile in catalysis. DUMP is bound by residues 178–181, Asn189, and 219–221; these read RSND and HIY. A (6R)-5,10-methylene-5,6,7,8-tetrahydrofolate-binding site is contributed by Asp181. Residue Ala278 coordinates (6R)-5,10-methylene-5,6,7,8-tetrahydrofolate.

The protein belongs to the thymidylate synthase family. Bacterial-type ThyA subfamily. Homodimer.

The protein resides in the cytoplasm. The catalysed reaction is dUMP + (6R)-5,10-methylene-5,6,7,8-tetrahydrofolate = 7,8-dihydrofolate + dTMP. It participates in pyrimidine metabolism; dTTP biosynthesis. Its function is as follows. Catalyzes the reductive methylation of 2'-deoxyuridine-5'-monophosphate (dUMP) to 2'-deoxythymidine-5'-monophosphate (dTMP) while utilizing 5,10-methylenetetrahydrofolate (mTHF) as the methyl donor and reductant in the reaction, yielding dihydrofolate (DHF) as a by-product. This enzymatic reaction provides an intracellular de novo source of dTMP, an essential precursor for DNA biosynthesis. The protein is Thymidylate synthase of Streptococcus sanguinis (strain SK36).